The following is a 253-amino-acid chain: Dehydration-responsive element-binding protein 1D (253 aa).

Positions 1–22 (MEKNTAASGQLMTSSAEATPSS) are enriched in polar residues. Residues 1-31 (MEKNTAASGQLMTSSAEATPSSPKRPAGRTK) form a disordered region. The segment at residues 39–98 (VFRGVRWRGCAGRWVCKVRVPGSRGDRFWIGTSDTAEETARTHDAAMLALCGASASLNFA) is a DNA-binding region (AP2/ERF). Residues 131–153 (RRVPAPGRGSTATATATSGDAAS) form a disordered region. The span at 134 to 153 (PAPGRGSTATATATSGDAAS) shows a compositional bias: low complexity.

It belongs to the AP2/ERF transcription factor family. ERF subfamily.

It localises to the nucleus. Its function is as follows. Transcriptional activator that binds specifically to the DNA sequence 5'-[AG]CCGAC-3'. Binding to the C-repeat/DRE element mediates high salinity- and dehydration-inducible transcription. The chain is Dehydration-responsive element-binding protein 1D (DREB1D) from Oryza sativa subsp. indica (Rice).